A 437-amino-acid chain; its full sequence is Methylenetetrahydrofolate--tRNA-(uracil-5-)-methyltransferase TrmFO (437 aa).

10–15 (GAGLAG) lines the FAD pocket.

It belongs to the MnmG family. TrmFO subfamily. The cofactor is FAD.

It is found in the cytoplasm. It catalyses the reaction uridine(54) in tRNA + (6R)-5,10-methylene-5,6,7,8-tetrahydrofolate + NADH + H(+) = 5-methyluridine(54) in tRNA + (6S)-5,6,7,8-tetrahydrofolate + NAD(+). It carries out the reaction uridine(54) in tRNA + (6R)-5,10-methylene-5,6,7,8-tetrahydrofolate + NADPH + H(+) = 5-methyluridine(54) in tRNA + (6S)-5,6,7,8-tetrahydrofolate + NADP(+). Its function is as follows. Catalyzes the folate-dependent formation of 5-methyl-uridine at position 54 (M-5-U54) in all tRNAs. This chain is Methylenetetrahydrofolate--tRNA-(uracil-5-)-methyltransferase TrmFO, found in Lysinibacillus sphaericus (strain C3-41).